The following is a 569-amino-acid chain: Urease subunit alpha (569 aa).

Residues Gly-131–Tyr-569 enclose the Urease domain. Ni(2+) is bound by residues His-136, His-138, and Lys-219. Lys-219 is modified (N6-carboxylysine). His-221 contributes to the substrate binding site. His-248 and His-274 together coordinate Ni(2+). His-322 acts as the Proton donor in catalysis. Asp-362 contacts Ni(2+).

It belongs to the metallo-dependent hydrolases superfamily. Urease alpha subunit family. As to quaternary structure, heterotrimer of UreA (gamma), UreB (beta) and UreC (alpha) subunits. Three heterotrimers associate to form the active enzyme. The cofactor is Ni cation. Carboxylation allows a single lysine to coordinate two nickel ions.

Its subcellular location is the cytoplasm. The enzyme catalyses urea + 2 H2O + H(+) = hydrogencarbonate + 2 NH4(+). The protein operates within nitrogen metabolism; urea degradation; CO(2) and NH(3) from urea (urease route): step 1/1. The sequence is that of Urease subunit alpha from Jannaschia sp. (strain CCS1).